Reading from the N-terminus, the 878-residue chain is Alanine--tRNA ligase (878 aa).

His567, His571, Cys669, and His673 together coordinate Zn(2+).

This sequence belongs to the class-II aminoacyl-tRNA synthetase family. It depends on Zn(2+) as a cofactor.

The protein localises to the cytoplasm. It catalyses the reaction tRNA(Ala) + L-alanine + ATP = L-alanyl-tRNA(Ala) + AMP + diphosphate. In terms of biological role, catalyzes the attachment of alanine to tRNA(Ala) in a two-step reaction: alanine is first activated by ATP to form Ala-AMP and then transferred to the acceptor end of tRNA(Ala). Also edits incorrectly charged Ser-tRNA(Ala) and Gly-tRNA(Ala) via its editing domain. In Rickettsia canadensis (strain McKiel), this protein is Alanine--tRNA ligase.